The sequence spans 133 residues: ATP synthase epsilon chain (133 aa).

Belongs to the ATPase epsilon chain family. In terms of assembly, F-type ATPases have 2 components, CF(1) - the catalytic core - and CF(0) - the membrane proton channel. CF(1) has five subunits: alpha(3), beta(3), gamma(1), delta(1), epsilon(1). CF(0) has three main subunits: a, b and c.

The protein localises to the cell membrane. Produces ATP from ADP in the presence of a proton gradient across the membrane. This Clostridium perfringens (strain SM101 / Type A) protein is ATP synthase epsilon chain.